Here is a 335-residue protein sequence, read N- to C-terminus: NADP(+)-dependent glycerol-3-phosphate dehydrogenase (335 aa).

Position 137 (Gly137) interacts with sn-glycerol 3-phosphate. Ala141 lines the NADPH pocket. Positions 192, 250, 259, and 260 each coordinate sn-glycerol 3-phosphate. Lys192 (proton acceptor) is an active-site residue. Arg259 is a binding site for NADPH. Residues Val287 and Glu289 each contribute to the NADPH site.

The protein belongs to the NAD-dependent glycerol-3-phosphate dehydrogenase family. Homodimer.

It localises to the cytoplasm. It carries out the reaction sn-glycerol 3-phosphate + NADP(+) = dihydroxyacetone phosphate + NADPH + H(+). In terms of biological role, catalyzes the reduction of the glycolytic intermediate dihydroxyacetone phosphate (DHAP) to sn-glycerol 3-phosphate (G3P). Shows a 15-fold preference for NADPH over NADH in the reduction process. Can also catalyze the reverse reaction in vitro. Shows no activity with dihydroxyacetone, glycerol, glycerol-2-phosphate, D-glyceraldehyde-3-phosphate, DL-glyceraldehyde, D-erythrose-4-phosphate, D-fructose-6-phosphate, beta-D-glucose-6-phosphate, or alpha-D-galactose-1-phosphate. The protein is NADP(+)-dependent glycerol-3-phosphate dehydrogenase of Archaeoglobus fulgidus (strain ATCC 49558 / DSM 4304 / JCM 9628 / NBRC 100126 / VC-16).